Here is a 382-residue protein sequence, read N- to C-terminus: Kelch domain-containing protein 3 (382 aa).

Kelch repeat units lie at residues 25-77 (RVYS…PYMR), 88-138 (TVFL…VLGK), 139-189 (IMYI…TMLG), 191-249 (HMYV…GYNG), and 251-301 (LYIF…IVGD).

As to quaternary structure, component of a CRL2(KLHDC3) complex, also named ECS(KLHDC3) complex, composed of CUL2, Elongin BC (ELOB and ELOC), RBX1 and substrate-specific adapter KLHDC3. May form oligomers as a KLHDC3-ELOB-ELOC complex; this interaction is likely autoinhibitory for the E3 ligase complex.

Its subcellular location is the cytoplasm. It functions in the pathway protein modification; protein ubiquitination. Substrate-recognition component of a Cul2-RING (CRL2) E3 ubiquitin-protein ligase complex of the DesCEND (destruction via C-end degrons) pathway, which recognizes a C-degron located at the extreme C terminus of target proteins, leading to their ubiquitination and degradation. The C-degron recognized by the DesCEND pathway is usually a motif of less than ten residues and can be present in full-length proteins, truncated proteins or proteolytically cleaved forms. The CRL2(KLHDC3) complex specifically recognizes proteins with a glycine (Gly) at the C-terminus, leading to their ubiquitination and degradation: recognizes the C-terminal -Arg-(Xaa)n-Arg-Gly, -Arg-(Xaa)n-Lys-Gly, and -Arg-(Xaa)n-Gln-Gly degrons. The CRL2(KLHDC3) complex mediates ubiquitination and degradation of truncated SELENOV and SEPHS2 selenoproteins produced by failed UGA/Sec decoding, which end with a glycine. May be involved in meiotic recombination process. The chain is Kelch domain-containing protein 3 from Rattus norvegicus (Rat).